A 211-amino-acid chain; its full sequence is Thiamine-phosphate synthase (211 aa).

Residues 39-41 (QLR) and asparagine 71 each bind 4-amino-2-methyl-5-(diphosphooxymethyl)pyrimidine. Residues aspartate 72 and aspartate 91 each contribute to the Mg(2+) site. Serine 110 serves as a coordination point for 4-amino-2-methyl-5-(diphosphooxymethyl)pyrimidine. 136–138 (TGT) lines the 2-[(2R,5Z)-2-carboxy-4-methylthiazol-5(2H)-ylidene]ethyl phosphate pocket. Residue lysine 139 coordinates 4-amino-2-methyl-5-(diphosphooxymethyl)pyrimidine. 2-[(2R,5Z)-2-carboxy-4-methylthiazol-5(2H)-ylidene]ethyl phosphate is bound by residues glycine 167 and 187 to 188 (VS).

Belongs to the thiamine-phosphate synthase family. Requires Mg(2+) as cofactor.

The catalysed reaction is 2-[(2R,5Z)-2-carboxy-4-methylthiazol-5(2H)-ylidene]ethyl phosphate + 4-amino-2-methyl-5-(diphosphooxymethyl)pyrimidine + 2 H(+) = thiamine phosphate + CO2 + diphosphate. The enzyme catalyses 2-(2-carboxy-4-methylthiazol-5-yl)ethyl phosphate + 4-amino-2-methyl-5-(diphosphooxymethyl)pyrimidine + 2 H(+) = thiamine phosphate + CO2 + diphosphate. It catalyses the reaction 4-methyl-5-(2-phosphooxyethyl)-thiazole + 4-amino-2-methyl-5-(diphosphooxymethyl)pyrimidine + H(+) = thiamine phosphate + diphosphate. It participates in cofactor biosynthesis; thiamine diphosphate biosynthesis; thiamine phosphate from 4-amino-2-methyl-5-diphosphomethylpyrimidine and 4-methyl-5-(2-phosphoethyl)-thiazole: step 1/1. Functionally, condenses 4-methyl-5-(beta-hydroxyethyl)thiazole monophosphate (THZ-P) and 2-methyl-4-amino-5-hydroxymethyl pyrimidine pyrophosphate (HMP-PP) to form thiamine monophosphate (TMP). This chain is Thiamine-phosphate synthase, found in Xanthobacter autotrophicus (strain ATCC BAA-1158 / Py2).